Consider the following 927-residue polypeptide: Non-lysosomal glucosylceramidase (927 aa).

Positions 32-62 (EETGGTKDVQVTDCKSPEDSRPPKETDCCNP) are disordered. The span at 46–58 (KSPEDSRPPKETD) shows a compositional bias: basic and acidic residues.

This sequence belongs to the non-lysosomal glucosylceramidase family. As to expression, widely expressed. Mainly expressed in brain, heart, skeletal muscle, kidney and placenta and expressed at lower levels in liver, spleen, small intestine and lung. Detectable in colon, thymus and peripheral blood leukocytes.

The protein localises to the endoplasmic reticulum membrane. The protein resides in the golgi apparatus membrane. The enzyme catalyses a beta-D-glucosyl-(1&lt;-&gt;1')-N-acylsphing-4-enine + H2O = an N-acylsphing-4-enine + D-glucose. It carries out the reaction a beta-D-galactosyl-(1&lt;-&gt;1')-N-acylsphing-4-enine + H2O = an N-acylsphing-4-enine + D-galactose. It catalyses the reaction beta-D-glucosyl-(1-&gt;3)-O-lithocholate + H2O = lithocholate + D-glucose. The catalysed reaction is beta-D-glucosyl-(1-&gt;3)-O-chenodeoxycholate + H2O = chenodeoxycholate + D-glucose. The enzyme catalyses a di-trans,poly-cis-dolichyl beta-D-glucosyl phosphate + chenodeoxycholate = beta-D-glucosyl-(1-&gt;3)-O-chenodeoxycholate + a di-trans,poly-cis-dolichyl phosphate + H(+). It carries out the reaction octyl beta-D-glucose + chenodeoxycholate = beta-D-glucosyl-(1-&gt;3)-O-chenodeoxycholate + octan-1-ol. It catalyses the reaction cholesteryl 3-beta-D-glucoside + H2O = cholesterol + D-glucose. The catalysed reaction is a beta-D-glucosyl-(1&lt;-&gt;1')-N-acylsphing-4-enine + cholesterol = cholesteryl 3-beta-D-glucoside + an N-acylsphing-4-enine. The enzyme catalyses beta-D-glucosyl-N-(9Z-octadecenoyl)-sphing-4E-enine + cholesterol = N-(9Z-octadecenoyl)-sphing-4-enine + cholesteryl 3-beta-D-glucoside. It carries out the reaction a beta-D-galactosyl-(1&lt;-&gt;1')-N-acylsphing-4-enine + cholesterol = cholesteryl 3-beta-D-galactoside + an N-acylsphing-4-enine. It catalyses the reaction 1-(beta-D-galactosyl)-N-dodecanoylsphing-4-enine + cholesterol = cholesteryl 3-beta-D-galactoside + N-dodecanoylsphing-4-enine. It participates in lipid metabolism; sphingolipid metabolism. It functions in the pathway steroid metabolism; cholesterol metabolism. With respect to regulation, inhibited by AMP-DMN/N -((5-adamantane-1-yl-methoxy)pentyl)-deoxynojirimycin. Activated by Mn(2+), Co(2+) and Mg(2+) and inhibited by Zn(2+). Enzymatic activity is dependent on membrane association and requires the presence of lipids. The membrane-associated enzyme is not inhibited by condutiriol B epoxide and bromocondutiriol B epoxide. Functionally, non-lysosomal glucosylceramidase that catalyzes the hydrolysis of glucosylceramides/GlcCers (such as beta-D-glucosyl-(1&lt;-&gt;1')-N-acylsphing-4-enine) to free glucose and ceramides (such as N-acylsphing-4-enine). GlcCers are membrane glycosphingolipids that have a wide intracellular distribution. They are the main precursors of more complex glycosphingolipids that play a role in cellular growth, differentiation, adhesion, signaling, cytoskeletal dynamics and membrane properties. Involved in the transglucosylation of cholesterol, transfers glucose from GlcCer to cholesterol, thereby modifying its water solubility and biological properties. Under specific conditions, may catalyze the reverse reaction, transferring glucose from cholesteryl-3-beta-D-glucoside to ceramide (such as N-acylsphing-4-enine). May play a role in the metabolism of bile acids. Able to hydrolyze bile acid 3-O-glucosides as well as to produce bile acid-glucose conjugates thanks to a bile acid glucosyl transferase activity. Catalyzes the hydrolysis of galactosylceramides/GalCers (such as beta-D-galactosyl-(1&lt;-&gt;1')-N-acylsphing-4-enine), as well as the galactosyl transfer between GalCers and cholesterol in vitro with lower activity compared with their activity against GlcCers. This is Non-lysosomal glucosylceramidase from Homo sapiens (Human).